The sequence spans 212 residues: Large ribosomal subunit protein uL3 (212 aa).

An N5-methylglutamine modification is found at Gln153.

It belongs to the universal ribosomal protein uL3 family. Part of the 50S ribosomal subunit. Forms a cluster with proteins L14 and L19. In terms of processing, methylated by PrmB.

Its function is as follows. One of the primary rRNA binding proteins, it binds directly near the 3'-end of the 23S rRNA, where it nucleates assembly of the 50S subunit. In Shewanella frigidimarina (strain NCIMB 400), this protein is Large ribosomal subunit protein uL3.